Here is a 388-residue protein sequence, read N- to C-terminus: MNYQPTPEDRFTFGLWTVGWQGRDPFGDATRRALDPVETVQRLAGLGAHGVTFHDDDLIPFGSSDTERESHIKRFRQALDATGMAVPMATTNLFTHPVFKDGAFTANDRDVRRYALRKTIRNIDLAAELGAKTYVAWGGREGAESGAAKDVRVALDRMKEAFDLLGEYVTAQGYDLRFAIEPKPNEPRGDILLPTVGHALAFIERLERPELYGVNPEVGHEQMAGLNFPHGIAQALWAGKLFHIDLNGQSGIKYDQDLRFGAGDLRAAFWLVDLLESAGYEGPKHFDFKPPRTEDLDGVWASAAGCMRNYLILKERTAAFRADPEVQEALRAARLDELAQPTAGDGLTALLADRTAFEDFDVEAAAARGMAFEQLDQLAMDHLLGARG.

Residues H54 and D57 contribute to the active site. E181, E217, H220, D245, D255, D257, and D287 together coordinate Mg(2+).

This sequence belongs to the xylose isomerase family. As to quaternary structure, homotetramer. Mg(2+) is required as a cofactor.

It is found in the cytoplasm. The enzyme catalyses alpha-D-xylose = alpha-D-xylulofuranose. This Streptomyces avermitilis (strain ATCC 31267 / DSM 46492 / JCM 5070 / NBRC 14893 / NCIMB 12804 / NRRL 8165 / MA-4680) protein is Xylose isomerase.